The chain runs to 364 residues: N-acetyl-gamma-glutamyl-phosphate reductase (364 aa).

Residue Cys-157 is part of the active site.

Belongs to the NAGSA dehydrogenase family. Type 1 subfamily.

The protein resides in the cytoplasm. The catalysed reaction is N-acetyl-L-glutamate 5-semialdehyde + phosphate + NADP(+) = N-acetyl-L-glutamyl 5-phosphate + NADPH + H(+). It participates in amino-acid biosynthesis; L-arginine biosynthesis; N(2)-acetyl-L-ornithine from L-glutamate: step 3/4. In terms of biological role, catalyzes the NADPH-dependent reduction of N-acetyl-5-glutamyl phosphate to yield N-acetyl-L-glutamate 5-semialdehyde. This Bifidobacterium longum (strain NCC 2705) protein is N-acetyl-gamma-glutamyl-phosphate reductase.